The primary structure comprises 423 residues: Gamma-glutamyl phosphate reductase (423 aa).

The protein belongs to the gamma-glutamyl phosphate reductase family.

It is found in the cytoplasm. It carries out the reaction L-glutamate 5-semialdehyde + phosphate + NADP(+) = L-glutamyl 5-phosphate + NADPH + H(+). The protein operates within amino-acid biosynthesis; L-proline biosynthesis; L-glutamate 5-semialdehyde from L-glutamate: step 2/2. Its function is as follows. Catalyzes the NADPH-dependent reduction of L-glutamate 5-phosphate into L-glutamate 5-semialdehyde and phosphate. The product spontaneously undergoes cyclization to form 1-pyrroline-5-carboxylate. This chain is Gamma-glutamyl phosphate reductase, found in Pseudomonas putida (strain ATCC 700007 / DSM 6899 / JCM 31910 / BCRC 17059 / LMG 24140 / F1).